The chain runs to 579 residues: MFS-type transporter ppz2 (579 aa).

Positions 1-23 are disordered; it reads MQTATALEDSANAPSPAASSQGQ. Over residues 10–20 the composition is skewed to low complexity; it reads SANAPSPAASS. The N-linked (GlcNAc...) asparagine glycan is linked to asparagine 38. Transmembrane regions (helical) follow at residues 48–68, 83–103, 121–141, 145–165, 171–191, 203–223, 236–256, 269–289, 298–318, 336–356, 374–394, 403–423, 438–460, and 516–536; these read ALIM…NTII, AAYT…TMVW, LCFF…MLIA, IQGI…GDLF, GLYY…GPVV, WCFY…ILLL, IAAI…MILL, SATV…CFSW, LLPV…ACFI, AVLG…AVSI, LTPI…FIDL, IIVF…APMV, TSAY…QTVF, and SMWI…PFLG.

Belongs to the major facilitator superfamily. TCR/Tet family.

The protein localises to the membrane. Its function is as follows. MFS-type transporter; part of the gene cluster that mediates the biosynthesis of pyrrolopyrazines, secondary metabolites showing insecticidal activity. Probably involved in the secretion of peramine and other pyrrolopyrazines. The protein is MFS-type transporter ppz2 of Metarhizium majus (strain ARSEF 297).